Reading from the N-terminus, the 469-residue chain is Probable lysophospholipase BODYGUARD 1 (469 aa).

The first 45 residues, Met-1–Tyr-45, serve as a signal peptide directing secretion. Residue Cys-46 is the site of N-palmitoyl cysteine attachment. The AB hydrolase-1 domain occupies Val-185–Ile-439. Residue His-189 is part of the active site. Ser-263 acts as the Nucleophile in catalysis. Active-site charge relay system residues include Asp-410 and His-438.

Expressed exclusively in protodermal and epidermal cells of all organs, especially on adaxial sides.

The protein resides in the cell membrane. The protein localises to the secreted. Its subcellular location is the cell wall. In terms of biological role, controls cuticle development and morphogenesis, by promoting cutin and suberin monomers loading. Involved in the regulation of abscissic acid (ABA) biosynthesis in response to osmotic stress. Plays an important role in osmotic stress and drought resistance. Required to ensure a reduced permeability of aerial tissue, thus preventing transpiration. Regulates lateral root hair development. Required for infection by the pathogenic necrotrophic fungus Botrytis cinerea, probably by regulating structural traits of the cuticle. This is Probable lysophospholipase BODYGUARD 1 from Arabidopsis thaliana (Mouse-ear cress).